The sequence spans 57 residues: UPF0391 membrane protein azo1765 (57 aa).

The next 2 membrane-spanning stretches (helical) occupy residues 1–21 and 33–53; these read MIKW…FGFT and VLFF…VGLG.

Belongs to the UPF0391 family.

It localises to the cell membrane. In Azoarcus sp. (strain BH72), this protein is UPF0391 membrane protein azo1765.